We begin with the raw amino-acid sequence, 392 residues long: Carbamoyl phosphate synthase small chain (392 aa).

The tract at residues 1-174 is CPSase; that stretch reads MSKKALLALE…EVIVENPEGD (174 aa). Residues Ser-47, Gly-224, and Gly-226 each contribute to the L-glutamine site. One can recognise a Glutamine amidotransferase type-1 domain in the interval 176-392; that stretch reads SVVVLDSGVK…EFKRLIKEVR (217 aa). Cys-252 serves as the catalytic Nucleophile. Leu-253, Gln-256, Asn-294, Gly-296, and Phe-297 together coordinate L-glutamine. Residues His-367 and Glu-369 contribute to the active site.

The protein belongs to the CarA family. As to quaternary structure, composed of two chains; the small (or glutamine) chain promotes the hydrolysis of glutamine to ammonia, which is used by the large (or ammonia) chain to synthesize carbamoyl phosphate. Tetramer of heterodimers (alpha,beta)4.

It catalyses the reaction hydrogencarbonate + L-glutamine + 2 ATP + H2O = carbamoyl phosphate + L-glutamate + 2 ADP + phosphate + 2 H(+). The enzyme catalyses L-glutamine + H2O = L-glutamate + NH4(+). It functions in the pathway amino-acid biosynthesis; L-arginine biosynthesis; carbamoyl phosphate from bicarbonate: step 1/1. The protein operates within pyrimidine metabolism; UMP biosynthesis via de novo pathway; (S)-dihydroorotate from bicarbonate: step 1/3. Functionally, small subunit of the glutamine-dependent carbamoyl phosphate synthetase (CPSase). CPSase catalyzes the formation of carbamoyl phosphate from the ammonia moiety of glutamine, carbonate, and phosphate donated by ATP, constituting the first step of 2 biosynthetic pathways, one leading to arginine and/or urea and the other to pyrimidine nucleotides. The small subunit (glutamine amidotransferase) binds and cleaves glutamine to supply the large subunit with the substrate ammonia. The sequence is that of Carbamoyl phosphate synthase small chain from Thermotoga maritima (strain ATCC 43589 / DSM 3109 / JCM 10099 / NBRC 100826 / MSB8).